The sequence spans 223 residues: UPF0441 protein YgiB (223 aa).

A compositionally biased stretch (low complexity) spans 178-195 (TVPKTAMAPKPATTTTVT). Positions 178-223 (TVPKTAMAPKPATTTTVTRGGFGESVAKQSTMQRSAAGTSTRSMGG) are disordered. Over residues 204–223 (AKQSTMQRSAAGTSTRSMGG) the composition is skewed to polar residues.

It belongs to the UPF0441 family.

The protein is UPF0441 protein YgiB of Salmonella paratyphi A (strain ATCC 9150 / SARB42).